Consider the following 226-residue polypeptide: NADH-quinone oxidoreductase subunit C (226 aa).

Positions 1–21 are disordered; the sequence is MTEPTGDQTPEIIGVRRGMFG.

Belongs to the complex I 30 kDa subunit family. In terms of assembly, NDH-1 is composed of 14 different subunits. Subunits NuoB, C, D, E, F, and G constitute the peripheral sector of the complex.

It is found in the cell membrane. It carries out the reaction a quinone + NADH + 5 H(+)(in) = a quinol + NAD(+) + 4 H(+)(out). In terms of biological role, NDH-1 shuttles electrons from NADH, via FMN and iron-sulfur (Fe-S) centers, to quinones in the respiratory chain. The immediate electron acceptor for the enzyme in this species is believed to be a menaquinone. Couples the redox reaction to proton translocation (for every two electrons transferred, four hydrogen ions are translocated across the cytoplasmic membrane), and thus conserves the redox energy in a proton gradient. The sequence is that of NADH-quinone oxidoreductase subunit C from Mycolicibacterium gilvum (strain PYR-GCK) (Mycobacterium gilvum (strain PYR-GCK)).